The sequence spans 369 residues: Delta(14)-sterol reductase (369 aa).

A run of 7 helical transmembrane segments spans residues 15-34 (QSVY…GEIL), 54-76 (CNGL…LGIV), 86-105 (LELL…ALYV), 146-168 (FFFV…AKSV), 178-195 (ILYQ…FVHE), 208-230 (RLGF…IQGW), and 240-262 (TVPA…RGAN). Residues lysine 265, lysine 269, leucine 289, tryptophan 294, and 301–302 (NY) each bind NADP(+). A helical membrane pass occupies residues 275–297 (PIWGKPPVVVGGKLLVSGYWGIA). A helical membrane pass occupies residues 317–336 (GISSPVPYFYPIYLLILLIW). NADP(+)-binding positions include aspartate 341, 345-349 (CAEKY), and tyrosine 356.

Belongs to the ERG4/ERG24 family.

It localises to the membrane. It catalyses the reaction 4,4-dimethyl-5alpha-cholesta-8,24-dien-3beta-ol + NADP(+) = 4,4-dimethyl-5alpha-cholesta-8,14,24-trien-3beta-ol + NADPH + H(+). It functions in the pathway steroid biosynthesis; zymosterol biosynthesis; zymosterol from lanosterol: step 2/6. Reduces the C14=C15 double bond of 4,4-dimethyl-cholesta-8,14,24-trienol to produce 4,4-dimethyl-cholesta-8,24-dienol. Required for cell division and expansion and is involved in proper organization of the embryo. The chain is Delta(14)-sterol reductase (FK) from Arabidopsis thaliana (Mouse-ear cress).